Here is a 400-residue protein sequence, read N- to C-terminus: Tryptophan synthase beta chain (400 aa).

Lys-90 carries the post-translational modification N6-(pyridoxal phosphate)lysine.

It belongs to the TrpB family. Tetramer of two alpha and two beta chains. Pyridoxal 5'-phosphate serves as cofactor.

The catalysed reaction is (1S,2R)-1-C-(indol-3-yl)glycerol 3-phosphate + L-serine = D-glyceraldehyde 3-phosphate + L-tryptophan + H2O. Its pathway is amino-acid biosynthesis; L-tryptophan biosynthesis; L-tryptophan from chorismate: step 5/5. Its function is as follows. The beta subunit is responsible for the synthesis of L-tryptophan from indole and L-serine. This is Tryptophan synthase beta chain from Alkaliphilus metalliredigens (strain QYMF).